Here is a 1214-residue protein sequence, read N- to C-terminus: Formin-D (1214 aa).

The GBD/FH3 domain occupies 10 to 379; that stretch reads KKEESPQSID…KMNNGESYLD (370 aa). Residues 401-448 are a coiled coil; sequence SGEKAVLIQKEIEDLKKQKKRDQDKLAEKDKLLTKLAKRMRKMEEAIK. The 88-residue stretch at 457 to 544 folds into the FH1 domain; the sequence is NNQIEIESPP…GSGDGIPLPP (88 aa). Polar residues-rich tracts occupy residues 462–479 and 518–534; these read IESPPDSSTSTPQETTPG and LDTTNQQGSTDASQTEA. Disordered stretches follow at residues 462 to 490, 507 to 569, 868 to 948, 1026 to 1045, 1054 to 1089, and 1133 to 1214; these read IESPPDSSTSTPQETTPGGTKVPLKTSPV, APNG…SRPP, PKSV…PLKD, DKSTQRKNEKERKEMEIKKS, LKKIGSPSSSNRILASNESSPTSSTSSVVHQHDDED, and MNLQ…EGEN. Over residues 541 to 554 the composition is skewed to pro residues; the sequence is PLPPGAPPPPPPPG. Residues 562-1037 enclose the FH2 domain; the sequence is PQLCSRPPSI…STQRKNEKER (476 aa). Residues 868-877 are compositionally biased toward basic and acidic residues; sequence PKSVEPKPDD. Residues 930-940 show a composition bias toward polar residues; sequence QVNTNSTSDSK. Positions 1019 to 1056 form a coiled coil; sequence EIEKSIKDKSTQRKNEKERKEMEIKKSKLEMIHSKLKK. Polar residues predominate over residues 1059-1071; it reads SPSSSNRILASNE. A DAD domain is found at 1065 to 1095; sequence RILASNESSPTSSTSSVVHQHDDEDEETIKE. Residues 1161-1171 show a composition bias toward low complexity; sequence SSTYSSISSIY. Acidic residues predominate over residues 1174–1214; the sequence is EPLDMSDQEDEDEEEEEDEEEEEEEEEGDDDNDNDEEEGEN. The stretch at 1176–1207 forms a coiled coil; that stretch reads LDMSDQEDEDEEEEEDEEEEEEEEEGDDDNDN.

The protein belongs to the formin homology family. Diaphanous subfamily. Interacts (via GBD/FH3 domain) with activated Rho-GTPases.

Functionally, formins play an important role in the nucleation of actin and the formation of linear actin filaments. The sequence is that of Formin-D (forD) from Dictyostelium discoideum (Social amoeba).